The primary structure comprises 852 residues: Elongation factor 2 (852 aa).

The region spanning 17–356 is the tr-type G domain; the sequence is RNIRNMSVIA…MIAFHLPSPV (340 aa). GTP is bound at residue 26–33; it reads AHVDHGKS. Phosphothreonine occurs at positions 57 and 59. GTP is bound by residues 170 to 173 and 227 to 229; these read NKMD and SGL. Histidine 709 carries the post-translational modification Diphthamide.

This sequence belongs to the TRAFAC class translation factor GTPase superfamily. Classic translation factor GTPase family. EF-G/EF-2 subfamily. Phosphorylation by EF-2 kinase completely inactivates EF-2. Post-translationally, AMPylated by fic-1.

Its subcellular location is the cytoplasm. The enzyme catalyses GTP + H2O = GDP + phosphate + H(+). Catalyzes the GTP-dependent ribosomal translocation step during translation elongation. During this step, the ribosome changes from the pre-translocational (PRE) to the post-translocational (POST) state as the newly formed A-site-bound peptidyl-tRNA and P-site-bound deacylated tRNA move to the P and E sites, respectively. Catalyzes the coordinated movement of the two tRNA molecules, the mRNA and conformational changes in the ribosome. Involved in the morphogenesis of epidermal tissues. The sequence is that of Elongation factor 2 (eef-2) from Caenorhabditis elegans.